The following is a 549-amino-acid chain: Cytochrome c oxidase subunit 1 (549 aa).

The chain crosses the membrane as a helical span at residues 18–38; that stretch reads LCYLLVAILSGFVGYVYSLFI. Ca(2+)-binding residues include Glu41 and Gly46. A helical membrane pass occupies residues 42 to 62; that stretch reads LSLIGCGILFGDYQFYNVLIT. Residue His64 coordinates Fe(II)-heme a. Transmembrane regions (helical) follow at residues 66 to 86, 100 to 120, 148 to 168, 186 to 206, and 222 to 242; these read LIMV…NYFI, LNNM…NGFL, FVMF…INLL, LFIW…PVLA, and FYDV…WFFG. His243 provides a ligand contact to Cu cation. The segment at residues 243 to 247 is a cross-link (1'-histidyl-3'-tyrosine (His-Tyr)); sequence HPEVY. The next 2 helical transmembrane spans lie at 246-266 and 269-289; these read VYII…VIGF and VFST…GMFV. O2 is bound at residue Tyr247. Cu cation-binding residues include His292 and His293. A run of 2 helical transmembrane segments spans residues 306 to 326 and 340 to 360; these read YFGG…FNWI and VYFV…GLFL. Positions 370 and 371 each coordinate Mg(2+). Heme a3 is bound at residue His378. Transmembrane regions (helical) follow at residues 379 to 399, 402 to 422, 460 to 480, 484 to 504, and 520 to 540; these read FHYV…IHFL, WLPI…LFIG, MLLL…FLFW, LFFV…STWL, and IVLD…IFFW. A Fe(II)-heme a-binding site is contributed by His380.

This sequence belongs to the heme-copper respiratory oxidase family. In terms of assembly, component of the cytochrome c oxidase (complex IV, CIV), a multisubunit enzyme composed of a catalytic core of 3 subunits and several supernumerary subunits. The complex exists as a monomer or a dimer and forms supercomplexes (SCs) in the inner mitochondrial membrane with ubiquinol-cytochrome c oxidoreductase (cytochrome b-c1 complex, complex III, CIII). It depends on heme as a cofactor. Cu cation is required as a cofactor.

It localises to the mitochondrion inner membrane. It carries out the reaction 4 Fe(II)-[cytochrome c] + O2 + 8 H(+)(in) = 4 Fe(III)-[cytochrome c] + 2 H2O + 4 H(+)(out). It participates in energy metabolism; oxidative phosphorylation. Component of the cytochrome c oxidase, the last enzyme in the mitochondrial electron transport chain which drives oxidative phosphorylation. The respiratory chain contains 3 multisubunit complexes succinate dehydrogenase (complex II, CII), ubiquinol-cytochrome c oxidoreductase (cytochrome b-c1 complex, complex III, CIII) and cytochrome c oxidase (complex IV, CIV), that cooperate to transfer electrons derived from NADH and succinate to molecular oxygen, creating an electrochemical gradient over the inner membrane that drives transmembrane transport and the ATP synthase. Cytochrome c oxidase is the component of the respiratory chain that catalyzes the reduction of oxygen to water. Electrons originating from reduced cytochrome c in the intermembrane space (IMS) are transferred via the dinuclear copper A center (CU(A)) of subunit 2 and heme A of subunit 1 to the active site in subunit 1, a binuclear center (BNC) formed by heme A3 and copper B (CU(B)). The BNC reduces molecular oxygen to 2 water molecules using 4 electrons from cytochrome c in the IMS and 4 protons from the mitochondrial matrix. This Leishmania tarentolae (Sauroleishmania tarentolae) protein is Cytochrome c oxidase subunit 1 (COI).